Here is a 78-residue protein sequence, read N- to C-terminus: Large ribosomal subunit protein uL29 (78 aa).

It belongs to the universal ribosomal protein uL29 family.

The protein is Large ribosomal subunit protein uL29 of Salinispora arenicola (strain CNS-205).